Consider the following 106-residue polypeptide: MQEDDICPVCGLPKELCVCEEVSKETVEKIKIYTEQVRPGKVVTIIEGLDDAGIDLQELASKLKRECACGGTAKEGKIILQGDHRNKVREFLIKKEGFSEDAIEVT.

Belongs to the SUI1 family.

The chain is Protein translation factor SUI1 homolog from Methanopyrus kandleri (strain AV19 / DSM 6324 / JCM 9639 / NBRC 100938).